The primary structure comprises 235 residues: Ubiquinone biosynthesis O-methyltransferase (235 aa).

Arg39, Gly59, Asp80, and Met124 together coordinate S-adenosyl-L-methionine.

It belongs to the methyltransferase superfamily. UbiG/COQ3 family.

It catalyses the reaction a 3-demethylubiquinol + S-adenosyl-L-methionine = a ubiquinol + S-adenosyl-L-homocysteine + H(+). The catalysed reaction is a 3-(all-trans-polyprenyl)benzene-1,2-diol + S-adenosyl-L-methionine = a 2-methoxy-6-(all-trans-polyprenyl)phenol + S-adenosyl-L-homocysteine + H(+). The protein operates within cofactor biosynthesis; ubiquinone biosynthesis. Its function is as follows. O-methyltransferase that catalyzes the 2 O-methylation steps in the ubiquinone biosynthetic pathway. The polypeptide is Ubiquinone biosynthesis O-methyltransferase (Vibrio campbellii (strain ATCC BAA-1116)).